A 674-amino-acid polypeptide reads, in one-letter code: DNA ligase (674 aa).

NAD(+) is bound by residues 34–38, 82–83, and Glu107; these read DADFD and SL. Lys109 acts as the N6-AMP-lysine intermediate in catalysis. Residues Arg130, Glu170, Lys286, and Lys310 each coordinate NAD(+). Zn(2+)-binding residues include Cys404, Cys407, Cys423, and Cys429. The BRCT domain occupies 593–674; it reads KPAQTLEGIT…FTRLLETGEA (82 aa).

The protein belongs to the NAD-dependent DNA ligase family. LigA subfamily. Mg(2+) is required as a cofactor. Mn(2+) serves as cofactor.

It carries out the reaction NAD(+) + (deoxyribonucleotide)n-3'-hydroxyl + 5'-phospho-(deoxyribonucleotide)m = (deoxyribonucleotide)n+m + AMP + beta-nicotinamide D-nucleotide.. Its function is as follows. DNA ligase that catalyzes the formation of phosphodiester linkages between 5'-phosphoryl and 3'-hydroxyl groups in double-stranded DNA using NAD as a coenzyme and as the energy source for the reaction. It is essential for DNA replication and repair of damaged DNA. This Corynebacterium aurimucosum (strain ATCC 700975 / DSM 44827 / CIP 107346 / CN-1) (Corynebacterium nigricans) protein is DNA ligase.